We begin with the raw amino-acid sequence, 389 residues long: Leucine aminopeptidase 1 (389 aa).

The N-terminal stretch at 1 to 18 (MKSAALLLPLYTAAFAAA) is a signal peptide. Positions 19 to 89 (AFHHEHAQAV…TLNHRINAES (71 aa)) are excised as a propeptide. Residues N99, N146, and N156 are each glycosylated (N-linked (GlcNAc...) asparagine). Positions 188, 207, 246, and 273 each coordinate Zn(2+). C322 and C326 are oxidised to a cystine. H355 is a binding site for Zn(2+).

Belongs to the peptidase M28 family. M28E subfamily. Monomer. It depends on Zn(2+) as a cofactor.

The protein localises to the secreted. Its function is as follows. Extracellular aminopeptidase that allows assimilation of proteinaceous substrates. This chain is Leucine aminopeptidase 1 (lap1), found in Pyrenophora tritici-repentis (strain Pt-1C-BFP) (Wheat tan spot fungus).